We begin with the raw amino-acid sequence, 250 residues long: AA9 family lytic polysaccharide monooxygenase AA17 (250 aa).

An N-terminal signal peptide occupies residues 1–21 (MAMSKIVSLTGLLASASLVAG). Positions 22 and 107 each coordinate Cu(2+). Disulfide bonds link Cys77/Cys199 and Cys118/Cys122. Asn159 is a glycosylation site (N-linked (GlcNAc...) asparagine). Residues His185 and Gln194 each contribute to the O2 site. Position 196 (Tyr196) interacts with Cu(2+).

The protein belongs to the polysaccharide monooxygenase AA9 family. The cofactor is Cu(2+).

It is found in the secreted. Lytic polysaccharide monooxygenase (LPMO) that exhibits oxidative cleavage beta-O-4 linkage of lignin resulting in the formation of aromatic compound guaiacol. Catalysis by LPMOs requires the reduction of the active-site copper from Cu(II) to Cu(I) by a reducing agent and H(2)O(2) or O(2) as a cosubstrate. Does not use cellulose, cello-oligosaccharides, xyloglucan, xylan, chitin nor starch as substrates. Able to depolymerize the lignin dimer guaicyl glycerol beta-guaicyl ether (GGE). The polypeptide is AA9 family lytic polysaccharide monooxygenase AA17 (Aspergillus oryzae (strain ATCC 42149 / RIB 40) (Yellow koji mold)).